The following is a 297-amino-acid chain: Oxidoreductase aprR (297 aa).

It belongs to the NmrA-type oxidoreductase family. Isoflavone reductase subfamily.

The protein operates within secondary metabolite biosynthesis. In terms of biological role, oxidoreductase; part of the gene cluster that mediates the biosynthesis of the asperipin-2a, a bicyclic peptide that possesses two macrocyclic ether rings consisting of 14- and 17-membered paracyclophans. The pathway starts with the processing of the precursor aprA by kexin proteases to produce 11 identical copies of the hexapeptide Phe-Tyr-Tyr-Thr-Gly-Tyr. Macrocyclization of asperipin-2a may accompany an alpha-hydroxylation-dehydration sequence to give an imine, which is readily hydrolyzed to yield putative ketone intermediate. The reductase aprR may be required for the final reduction to yield asperipin-2a. This is Oxidoreductase aprR from Aspergillus flavus (strain ATCC 200026 / FGSC A1120 / IAM 13836 / NRRL 3357 / JCM 12722 / SRRC 167).